A 679-amino-acid chain; its full sequence is Penicillin-binding protein 1A (679 aa).

Over residues 1–14 (MTERKREHKDRKQN) the composition is skewed to basic residues. The interval 1-20 (MTERKREHKDRKQNKNSPKN) is disordered. Residues 1 to 30 (MTERKREHKDRKQNKNSPKNQSKVTKFLKW) are Cytoplasmic-facing. Residues 31–51 (FFIGILLLGITAVTVVGIYVL) form a helical; Signal-anchor for type II membrane protein membrane-spanning segment. The Extracellular segment spans residues 52-679 (SIIRSSPELD…QYKEVDNLVE (628 aa)). The interval 72–244 (SILYDDQGNF…PTSYDGLSEA (173 aa)) is transglycosylase. E111 functions as the Proton donor; for transglycosylase activity in the catalytic mechanism. Positions 378 to 663 (ASATIIDYKT…TSPIFGKIMG (286 aa)) are transpeptidase. Residue S417 is the Acyl-ester intermediate; for transpeptidase activity of the active site.

It in the N-terminal section; belongs to the glycosyltransferase 51 family. This sequence in the C-terminal section; belongs to the transpeptidase family.

The protein localises to the cell membrane. It carries out the reaction [GlcNAc-(1-&gt;4)-Mur2Ac(oyl-L-Ala-gamma-D-Glu-L-Lys-D-Ala-D-Ala)](n)-di-trans,octa-cis-undecaprenyl diphosphate + beta-D-GlcNAc-(1-&gt;4)-Mur2Ac(oyl-L-Ala-gamma-D-Glu-L-Lys-D-Ala-D-Ala)-di-trans,octa-cis-undecaprenyl diphosphate = [GlcNAc-(1-&gt;4)-Mur2Ac(oyl-L-Ala-gamma-D-Glu-L-Lys-D-Ala-D-Ala)](n+1)-di-trans,octa-cis-undecaprenyl diphosphate + di-trans,octa-cis-undecaprenyl diphosphate + H(+). It catalyses the reaction Preferential cleavage: (Ac)2-L-Lys-D-Ala-|-D-Ala. Also transpeptidation of peptidyl-alanyl moieties that are N-acyl substituents of D-alanine.. It functions in the pathway cell wall biogenesis; peptidoglycan biosynthesis. Functionally, cell wall formation. Synthesis of cross-linked peptidoglycan from the lipid intermediates. The enzyme has a penicillin-insensitive transglycosylase N-terminal domain (formation of linear glycan strands) and a penicillin-sensitive transpeptidase C-terminal domain (cross-linking of the peptide subunits). The polypeptide is Penicillin-binding protein 1A (pbpA) (Clostridium perfringens (strain 13 / Type A)).